The primary structure comprises 196 residues: Probable peptidyl-prolyl cis-trans isomerase (196 aa).

The N-terminal stretch at 1-26 (MSFIRSALAAAAFVALSIGAVQTASA) is a signal peptide. In terms of domain architecture, PPIase cyclophilin-type spans 29–194 (PENTVILKLK…KIIKATIEAD (166 aa)).

Belongs to the cyclophilin-type PPIase family.

It localises to the periplasm. It catalyses the reaction [protein]-peptidylproline (omega=180) = [protein]-peptidylproline (omega=0). PPIases accelerate the folding of proteins. It catalyzes the cis-trans isomerization of proline imidic peptide bonds in oligopeptides. The polypeptide is Probable peptidyl-prolyl cis-trans isomerase (ppi) (Brucella abortus (strain 2308)).